We begin with the raw amino-acid sequence, 557 residues long: Formate--tetrahydrofolate ligase 2 (557 aa).

Thr-66 to Thr-73 is an ATP binding site.

The protein belongs to the formate--tetrahydrofolate ligase family.

It catalyses the reaction (6S)-5,6,7,8-tetrahydrofolate + formate + ATP = (6R)-10-formyltetrahydrofolate + ADP + phosphate. The protein operates within one-carbon metabolism; tetrahydrofolate interconversion. This Streptococcus pyogenes serotype M12 (strain MGAS9429) protein is Formate--tetrahydrofolate ligase 2.